Reading from the N-terminus, the 452-residue chain is Protein henna (452 aa).

The ACT domain maps to 36–107 (FSPKDSSLSS…EQCSYFNIIS (72 aa)). Ser-272 carries the post-translational modification Phosphoserine; by CaMK2. Residues His-284, His-289, and Glu-329 each coordinate Fe cation.

This sequence belongs to the biopterin-dependent aromatic amino acid hydroxylase family. Fe(2+) is required as a cofactor. As to expression, phenylalanine hydrolase activity is found in yolk granules of embryos, and female abdomen and fat body tissues. Tryptophan hydroxylase is expressed in serotonergic neurons. Both enzymes are present in cuticular tissues.

The enzyme catalyses (6R)-L-erythro-5,6,7,8-tetrahydrobiopterin + L-phenylalanine + O2 = (4aS,6R)-4a-hydroxy-L-erythro-5,6,7,8-tetrahydrobiopterin + L-tyrosine. It catalyses the reaction (6R)-L-erythro-5,6,7,8-tetrahydrobiopterin + L-tryptophan + O2 = 5-hydroxy-L-tryptophan + (4aS,6R)-4a-hydroxy-L-erythro-5,6,7,8-tetrahydrobiopterin. The protein operates within amino-acid degradation; L-phenylalanine degradation; acetoacetate and fumarate from L-phenylalanine: step 1/6. Its activity is regulated as follows. N-terminal region of PAH is thought to contain allosteric binding sites for phenylalanine and to constitute an 'inhibitory' domain that regulates the activity of a catalytic domain in the C-terminal portion of the molecule. This Drosophila melanogaster (Fruit fly) protein is Protein henna (Hn).